A 218-amino-acid chain; its full sequence is ATP phosphoribosyltransferase (218 aa).

It belongs to the ATP phosphoribosyltransferase family. Short subfamily. As to quaternary structure, heteromultimer composed of HisG and HisZ subunits.

It localises to the cytoplasm. It carries out the reaction 1-(5-phospho-beta-D-ribosyl)-ATP + diphosphate = 5-phospho-alpha-D-ribose 1-diphosphate + ATP. The protein operates within amino-acid biosynthesis; L-histidine biosynthesis; L-histidine from 5-phospho-alpha-D-ribose 1-diphosphate: step 1/9. Catalyzes the condensation of ATP and 5-phosphoribose 1-diphosphate to form N'-(5'-phosphoribosyl)-ATP (PR-ATP). Has a crucial role in the pathway because the rate of histidine biosynthesis seems to be controlled primarily by regulation of HisG enzymatic activity. This Trichormus variabilis (strain ATCC 29413 / PCC 7937) (Anabaena variabilis) protein is ATP phosphoribosyltransferase.